The sequence spans 215 residues: Ribosomal RNA small subunit methyltransferase G (215 aa).

S-adenosyl-L-methionine is bound by residues Gly78, Leu83, 128–129 (AE), and Arg146.

It belongs to the methyltransferase superfamily. RNA methyltransferase RsmG family.

It localises to the cytoplasm. The catalysed reaction is guanosine(527) in 16S rRNA + S-adenosyl-L-methionine = N(7)-methylguanosine(527) in 16S rRNA + S-adenosyl-L-homocysteine. Specifically methylates the N7 position of guanine in position 527 of 16S rRNA. The protein is Ribosomal RNA small subunit methyltransferase G of Anaeromyxobacter sp. (strain Fw109-5).